The primary structure comprises 284 residues: Tropomyosin (284 aa).

The disordered stretch occupies residues 1 to 38; it reads MEAIKKKMQAMKLEKDNAVDRAETAEQQSREAALRAEK. The stretch at 1 to 284 forms a coiled coil; the sequence is MEAIKKKMQA…DQTFSELTGY (284 aa). The segment covering 12–38 has biased composition (basic and acidic residues); that stretch reads KLEKDNAVDRAETAEQQSREAALRAEK.

This sequence belongs to the tropomyosin family. Homodimer.

In terms of biological role, tropomyosin, in association with the troponin complex, plays a central role in the calcium dependent regulation of muscle contraction. The chain is Tropomyosin from Rhipicephalus microplus (Cattle tick).